The following is a 55-amino-acid chain: Large ribosomal subunit protein bL33 (55 aa).

It belongs to the bacterial ribosomal protein bL33 family.

The polypeptide is Large ribosomal subunit protein bL33 (Azoarcus sp. (strain BH72)).